We begin with the raw amino-acid sequence, 97 residues long: Large ribosomal subunit protein bL28 (97 aa).

Belongs to the bacterial ribosomal protein bL28 family.

This is Large ribosomal subunit protein bL28 from Rhizorhabdus wittichii (strain DSM 6014 / CCUG 31198 / JCM 15750 / NBRC 105917 / EY 4224 / RW1) (Sphingomonas wittichii).